Here is a 236-residue protein sequence, read N- to C-terminus: Endonuclease V (236 aa).

Residues aspartate 47 and aspartate 115 each coordinate Mg(2+).

This sequence belongs to the endonuclease V family. Mg(2+) serves as cofactor.

It localises to the cytoplasm. The catalysed reaction is Endonucleolytic cleavage at apurinic or apyrimidinic sites to products with a 5'-phosphate.. Functionally, DNA repair enzyme involved in the repair of deaminated bases. Selectively cleaves double-stranded DNA at the second phosphodiester bond 3' to a deoxyinosine leaving behind the intact lesion on the nicked DNA. The chain is Endonuclease V from Xanthomonas campestris pv. campestris (strain 8004).